The sequence spans 156 residues: Small ribosomal subunit protein uS7 (156 aa).

It belongs to the universal ribosomal protein uS7 family. In terms of assembly, part of the 30S ribosomal subunit. Contacts proteins S9 and S11.

One of the primary rRNA binding proteins, it binds directly to 16S rRNA where it nucleates assembly of the head domain of the 30S subunit. Is located at the subunit interface close to the decoding center, probably blocks exit of the E-site tRNA. This chain is Small ribosomal subunit protein uS7, found in Alkalilimnicola ehrlichii (strain ATCC BAA-1101 / DSM 17681 / MLHE-1).